The primary structure comprises 185 residues: Ribosome-recycling factor (185 aa).

This sequence belongs to the RRF family.

The protein localises to the cytoplasm. Responsible for the release of ribosomes from messenger RNA at the termination of protein biosynthesis. May increase the efficiency of translation by recycling ribosomes from one round of translation to another. The chain is Ribosome-recycling factor from Serratia proteamaculans (strain 568).